Here is a 102-residue protein sequence, read N- to C-terminus: uncharacterized protein (102 aa).

An N-terminal signal peptide occupies residues 1 to 19; it reads MFLFCFVLFCSLVFPLARG.

This is an uncharacterized protein from Saccharomyces cerevisiae (strain ATCC 204508 / S288c) (Baker's yeast).